The following is a 250-amino-acid chain: DNA polymerase sliding clamp (250 aa).

The protein belongs to the PCNA family. As to quaternary structure, homotrimer. The subunits circularize to form a toroid; DNA passes through its center. Replication factor C (RFC) is required to load the toroid on the DNA.

Functionally, sliding clamp subunit that acts as a moving platform for DNA processing. Responsible for tethering the catalytic subunit of DNA polymerase and other proteins to DNA during high-speed replication. The polypeptide is DNA polymerase sliding clamp (Methanococcus maripaludis (strain C7 / ATCC BAA-1331)).